The chain runs to 1182 residues: Phosphatidylinositol 3-kinase age-1 (1182 aa).

Residues 1–16 show a composition bias toward polar residues; the sequence is MSMGRSPSTTFRSRTG. The disordered stretch occupies residues 1–24; the sequence is MSMGRSPSTTFRSRTGSHGARDLI. One can recognise a PI3K-ABD domain in the interval 74–174; that stretch reads NEGVADIITM…FPMLFLYQPD (101 aa). In terms of domain architecture, PI3K-RBD spans 266-358; that stretch reads KRKAEINGVC…YRCPGFVVRR (93 aa). The 153-residue stretch at 425-577 folds into the C2 PI3K-type domain; sequence LDANLMIRPV…SSYGGRVRMP (153 aa). One can recognise a PIK helical domain in the interval 601 to 788; that stretch reads DDYESCIRDP…SLLMEAYLRG (188 aa). Positions 853–1168 constitute a PI3K/PI4K catalytic domain; that stretch reads IIDKAIVLGS…IYEEAFNGSW (316 aa). A G-loop region spans residues 859 to 865; that stretch reads VLGSAKR. The tract at residues 1028–1036 is catalytic loop; the sequence is GIKDRHSDN. The activation loop stretch occupies residues 1047-1073; that stretch reads HIDFGHILGHGKTKLGIQRDRQPFILT.

This sequence belongs to the PI3/PI4-kinase family.

The enzyme catalyses a 1,2-diacyl-sn-glycero-3-phospho-(1D-myo-inositol) + ATP = a 1,2-diacyl-sn-glycero-3-phospho-(1D-myo-inositol-3-phosphate) + ADP + H(+). Phosphatidylinositol 3-kinase homolog that regulates longevity and diapause. Promotes cell survival during embryonic development by recruiting akt-1/2 to the plasma membrane through the production of PtdIns(3,4,5)P3. Could function in the development or neuroendocrine signaling of the dauer pathway. Mediates susceptibility to enteropathogenic E.coli infection. May negatively regulate AYI interneuron neurite outgrowth. Plays a role in aversive olfactory learning when an odor is associated with food deprivation. Regulates this process by promoting the nuclear relocalization of egl-4 in AWC olfactory neurons after odor conditioning. The sequence is that of Phosphatidylinositol 3-kinase age-1 from Caenorhabditis elegans.